A 113-amino-acid polypeptide reads, in one-letter code: Dolichyl-diphosphooligosaccharide--protein glycosyltransferase subunit DAD1 (113 aa).

Position 2 is an N-acetylserine (S2). Residues 2 to 30 (SASVLSVISRFLEEYLSSTPQRLKLLDAY) are Cytoplasmic-facing. The helical transmembrane segment at 31 to 51 (LLYILLTGALQFGYCLLVGTF) threads the bilayer. Position 52 (P52) is a topological domain, lumenal. Residues 53 to 73 (FNSFLSGFISCVGSFILAVCL) traverse the membrane as a helical segment. At 74–92 (RIQINPQNKADFQGISPER) the chain is on the cytoplasmic side. Residues 93–113 (AFADFLFASTILHLVVMNFVG) form a helical membrane-spanning segment.

It belongs to the DAD/OST2 family. Component of the oligosaccharyltransferase (OST) complex. OST exists in two different complex forms which contain common core subunits RPN1, RPN2, OST48, OST4, DAD1 and TMEM258, either STT3A or STT3B as catalytic subunits, and form-specific accessory subunits. STT3A complex assembly occurs through the formation of 3 subcomplexes. Subcomplex 1 contains RPN1 and TMEM258, subcomplex 2 contains the STT3A-specific subunits STT3A, DC2/OSTC, and KCP2 as well as the core subunit OST4, and subcomplex 3 contains RPN2, DAD1, and OST48. The STT3A complex can form stable complexes with the Sec61 complex or with both the Sec61 and TRAP complexes.

It localises to the endoplasmic reticulum membrane. It functions in the pathway protein modification; protein glycosylation. Its function is as follows. Subunit of the oligosaccharyl transferase (OST) complex that catalyzes the initial transfer of a defined glycan (Glc(3)Man(9)GlcNAc(2) in eukaryotes) from the lipid carrier dolichol-pyrophosphate to an asparagine residue within an Asn-X-Ser/Thr consensus motif in nascent polypeptide chains, the first step in protein N-glycosylation. N-glycosylation occurs cotranslationally and the complex associates with the Sec61 complex at the channel-forming translocon complex that mediates protein translocation across the endoplasmic reticulum (ER). All subunits are required for a maximal enzyme activity. The chain is Dolichyl-diphosphooligosaccharide--protein glycosyltransferase subunit DAD1 from Sus scrofa (Pig).